A 58-amino-acid polypeptide reads, in one-letter code: uncharacterized protein (58 aa).

The chain crosses the membrane as a helical span at residues 12-32 (VMTLLITISILIVLAVLLVTI).

Its subcellular location is the cell membrane. This is an uncharacterized protein from Bacillus subtilis (strain 168).